Consider the following 646-residue polypeptide: MTNNQTDRPRPPGPESRRFDNNDKNNRNRWGPIPSWAWIVLIVALLLNWLVAPILFPEGKGAVSIPYTSFKQQLENNNVAEVTTQADKITGEFKQAVKVPGVDQPVKRFVTHIPAFGDDQLMSQLDQKGVIVNVQPESSTRSLLLSILISFGPTILFFLLFLWLISKAQSSQQGLFGLGKSRAKRYNATESTRVTFDDVAGIEEAKQELAEIVDFLKNPQKYQRLGGTIPKGVLLIGPPGTGKTLLARAVAGEAGVPFFSMSGSEFVEMIVGVGAARVRELFQQAKKEAPCIIFVDELDAIGRRRGSSINVGGHDEREQTLNQLLVEMDGFDSRQGVIVLAATNRPDVLDPALLRPGRFDRRVVVQRPDKVGRLKILQVHTRNVPLDPNLDLSEIAAATPGLVGADLRNLVNEAALLAARRGKNYVDREDFFDALEKITLGAERKLLISEEDRRRVAYHESGHALLGLLLPEADPVHKVTIIPRGQALGVTYQTPEDDRYNYTERYLRSRITAALGGRAAEELVFGTVTTGAENDLKQVTEIARQMVTRWGMSKEVGLVYLSPDGQEDFLGPNPITSREYSESLATVIDRETRRIIDECYAEALSLLNRERQRLDNLAEALLREESLDEQQIREIVGLGEKQPEPA.

The tract at residues 1 to 27 is disordered; that stretch reads MTNNQTDRPRPPGPESRRFDNNDKNNR. The Cytoplasmic portion of the chain corresponds to 1–35; that stretch reads MTNNQTDRPRPPGPESRRFDNNDKNNRNRWGPIPS. A compositionally biased stretch (basic and acidic residues) spans 7 to 26; the sequence is DRPRPPGPESRRFDNNDKNN. A helical membrane pass occupies residues 36–56; that stretch reads WAWIVLIVALLLNWLVAPILF. Residues 57-144 are Extracellular-facing; the sequence is PEGKGAVSIP…QPESSTRSLL (88 aa). A helical transmembrane segment spans residues 145 to 165; it reads LSILISFGPTILFFLLFLWLI. Topologically, residues 166–646 are cytoplasmic; that stretch reads SKAQSSQQGL…GLGEKQPEPA (481 aa). Position 237–244 (237–244) interacts with ATP; sequence GPPGTGKT. Histidine 459 contributes to the Zn(2+) binding site. The active site involves glutamate 460. Positions 463 and 535 each coordinate Zn(2+).

This sequence in the central section; belongs to the AAA ATPase family. The protein in the C-terminal section; belongs to the peptidase M41 family. Homohexamer. Zn(2+) serves as cofactor.

The protein localises to the cell membrane. Its function is as follows. Acts as a processive, ATP-dependent zinc metallopeptidase for both cytoplasmic and membrane proteins. Plays a role in the quality control of integral membrane proteins. The polypeptide is ATP-dependent zinc metalloprotease FtsH (Thermobaculum terrenum (strain ATCC BAA-798 / CCMEE 7001 / YNP1)).